The following is a 181-amino-acid chain: Crossover junction endodeoxyribonuclease RuvC (181 aa).

Residues aspartate 7, glutamate 67, and aspartate 139 contribute to the active site. Mg(2+) is bound by residues aspartate 7, glutamate 67, and aspartate 139.

Belongs to the RuvC family. In terms of assembly, homodimer which binds Holliday junction (HJ) DNA. The HJ becomes 2-fold symmetrical on binding to RuvC with unstacked arms; it has a different conformation from HJ DNA in complex with RuvA. In the full resolvosome a probable DNA-RuvA(4)-RuvB(12)-RuvC(2) complex forms which resolves the HJ. Requires Mg(2+) as cofactor.

Its subcellular location is the cytoplasm. The catalysed reaction is Endonucleolytic cleavage at a junction such as a reciprocal single-stranded crossover between two homologous DNA duplexes (Holliday junction).. In terms of biological role, the RuvA-RuvB-RuvC complex processes Holliday junction (HJ) DNA during genetic recombination and DNA repair. Endonuclease that resolves HJ intermediates. Cleaves cruciform DNA by making single-stranded nicks across the HJ at symmetrical positions within the homologous arms, yielding a 5'-phosphate and a 3'-hydroxyl group; requires a central core of homology in the junction. The consensus cleavage sequence is 5'-(A/T)TT(C/G)-3'. Cleavage occurs on the 3'-side of the TT dinucleotide at the point of strand exchange. HJ branch migration catalyzed by RuvA-RuvB allows RuvC to scan DNA until it finds its consensus sequence, where it cleaves and resolves the cruciform DNA. This chain is Crossover junction endodeoxyribonuclease RuvC, found in Cupriavidus pinatubonensis (strain JMP 134 / LMG 1197) (Cupriavidus necator (strain JMP 134)).